The following is a 1094-amino-acid chain: Formin-like protein 1 (1094 aa).

Disordered stretches follow at residues 1–29 (MGNAAGSAEQPAGPTASPPKQPAVPKQPM), 173–199 (SGAEKSKPLDQSVEDLSKAPPSSVPKS), and 507–627 (AATP…GVKA). A lipid anchor (N-myristoyl glycine) is attached at glycine 2. Residue serine 7 is modified to Phosphoserine. Pro residues predominate over residues 16 to 28 (ASPPKQPAVPKQP). One can recognise a GBD/FH3 domain in the interval 27–464 (QPMPAAGELE…SRRIPEPEKV (438 aa)). Phosphoserine is present on serine 184. Over residues 519–529 (RVSTDSPSTAE) the composition is skewed to polar residues. 2 stretches are compositionally biased toward pro residues: residues 535–549 (ASPPPPPPPPPPPLP) and 559–610 (PSAP…PGGP). Residues 627–1018 (AKKPIQTKFR…DTSGREEPPT (392 aa)) enclose the FH2 domain. A Phosphoserine modification is found at serine 688. The span at 1002 to 1017 (WKKEAAADTSGREEPP) shows a compositional bias: basic and acidic residues. The segment at 1002–1094 (WKKEAAADTS…PLPVTTDLAL (93 aa)) is disordered. Position 1021 is a phosphoserine (serine 1021). The region spanning 1049–1082 (SDRDGAIEDIITDLRNQPYIRADTGRRSARRRPP) is the DAD domain.

It belongs to the formin homology family. Interacts with RAC1, PFN1 and PFN2. Interacts (activated by RAC1) with SRGAP2 (via SH3 domain); regulates the actin filament severing activity of FMNL1. In terms of processing, myristoylation mediates membrane localization. In terms of tissue distribution, highly expressed in the spleen, lymph node and bone marrow cells.

It localises to the cytoplasm. Its subcellular location is the cell membrane. The protein resides in the cytoplasmic vesicle. The protein localises to the phagosome. Plays a role in the regulation of cell morphology and cytoskeletal organization. Required in the cortical actin filament dynamics and cell shape. May play a role in the control of cell motility and survival of macrophages. The chain is Formin-like protein 1 (Fmnl1) from Mus musculus (Mouse).